A 581-amino-acid chain; its full sequence is Dehydrocurvularin exporter (581 aa).

The span at M1–N10 shows a compositional bias: polar residues. A disordered region spans residues M1–G47. The N-linked (GlcNAc...) asparagine glycan is linked to N11. The span at S24–D39 shows a compositional bias: basic and acidic residues. The next 14 membrane-spanning stretches (helical) occupy residues L61 to A81, D96 to G116, W126 to P146, G159 to P179, L184 to G204, W215 to L235, I251 to T271, V288 to L308, I330 to F350, V363 to I383, Y392 to V412, V424 to F444, I456 to F476, and V527 to F547. The tract at residues D552 to V581 is disordered. Residues D565–V581 show a composition bias toward basic and acidic residues.

It belongs to the major facilitator superfamily. TCR/Tet family.

The protein resides in the cell membrane. Its function is as follows. Efflux pump that is probably involved in the export of dehydrocurvularin. The protein is Dehydrocurvularin exporter of Alternaria cinerariae.